The primary structure comprises 579 residues: V-type ATP synthase alpha chain (579 aa).

227–234 (GGFGTGKT) serves as a coordination point for ATP.

This sequence belongs to the ATPase alpha/beta chains family.

The catalysed reaction is ATP + H2O + 4 H(+)(in) = ADP + phosphate + 5 H(+)(out). Its function is as follows. Produces ATP from ADP in the presence of a proton gradient across the membrane. The V-type alpha chain is a catalytic subunit. This is V-type ATP synthase alpha chain from Anaeromyxobacter dehalogenans (strain 2CP-C).